The sequence spans 346 residues: Leucine zipper protein 2 (346 aa).

An N-terminal signal peptide occupies residues 1–17; it reads MKFIGAVYLLFLLPALS. N-linked (GlcNAc...) asparagine glycosylation is found at asparagine 19 and asparagine 131. Residues 41–209 are a coiled coil; the sequence is RHLSKTSKEL…QLKALKDTVH (169 aa). The segment at 162–190 is leucine-zipper; it reads LRYGKKDLIFKGQQLMDLENKLKVAKDEL. N-linked (GlcNAc...) asparagine glycans are attached at residues asparagine 241 and asparagine 296. The interval 271–346 is disordered; that stretch reads SAVMRRESTG…LKKTQSDKHN (76 aa). Residues 293-324 show a composition bias toward polar residues; it reads CSHNQTESSSVMKKTFGHSQSKTPEQNGQGQA. Positions 326–346 are enriched in basic and acidic residues; sequence TAEESVKTDGELKKTQSDKHN.

It is found in the secreted. The chain is Leucine zipper protein 2 (luzp2) from Danio rerio (Zebrafish).